Here is a 172-residue protein sequence, read N- to C-terminus: Ribosome maturation factor RimM (172 aa).

One can recognise a PRC barrel domain in the interval 95–168 (AEGEFYYHQI…RVDVEIMEGL (74 aa)).

It belongs to the RimM family. As to quaternary structure, binds ribosomal protein uS19.

The protein resides in the cytoplasm. In terms of biological role, an accessory protein needed during the final step in the assembly of 30S ribosomal subunit, possibly for assembly of the head region. Essential for efficient processing of 16S rRNA. May be needed both before and after RbfA during the maturation of 16S rRNA. It has affinity for free ribosomal 30S subunits but not for 70S ribosomes. This Streptococcus equi subsp. equi (strain 4047) protein is Ribosome maturation factor RimM.